The following is a 248-amino-acid chain: tRNA pseudouridine synthase A (248 aa).

D53 acts as the Nucleophile in catalysis. Y111 lines the substrate pocket.

The protein belongs to the tRNA pseudouridine synthase TruA family. Homodimer.

It catalyses the reaction uridine(38/39/40) in tRNA = pseudouridine(38/39/40) in tRNA. In terms of biological role, formation of pseudouridine at positions 38, 39 and 40 in the anticodon stem and loop of transfer RNAs. The chain is tRNA pseudouridine synthase A from Listeria monocytogenes serovar 1/2a (strain ATCC BAA-679 / EGD-e).